The primary structure comprises 236 residues: 27 kDa hemolymph protein (236 aa).

The signal sequence occupies residues 1–17 (MMWKLIIVTILAVGVLC).

In terms of assembly, monomer. Hemolymph.

Its subcellular location is the secreted. The protein is 27 kDa hemolymph protein of Galleria mellonella (Greater wax moth).